Here is a 45-residue protein sequence, read N- to C-terminus: Large ribosomal subunit protein bL34 (45 aa).

This sequence belongs to the bacterial ribosomal protein bL34 family.

This Streptomyces bikiniensis protein is Large ribosomal subunit protein bL34 (rpmH).